Consider the following 165-residue polypeptide: SsrA-binding protein (165 aa).

The interval 141-165 (KLHDKRQEEKRKQADREVKSALARY) is disordered. Over residues 145–159 (KRQEEKRKQADREVK) the composition is skewed to basic and acidic residues.

This sequence belongs to the SmpB family.

The protein resides in the cytoplasm. Functionally, required for rescue of stalled ribosomes mediated by trans-translation. Binds to transfer-messenger RNA (tmRNA), required for stable association of tmRNA with ribosomes. tmRNA and SmpB together mimic tRNA shape, replacing the anticodon stem-loop with SmpB. tmRNA is encoded by the ssrA gene; the 2 termini fold to resemble tRNA(Ala) and it encodes a 'tag peptide', a short internal open reading frame. During trans-translation Ala-aminoacylated tmRNA acts like a tRNA, entering the A-site of stalled ribosomes, displacing the stalled mRNA. The ribosome then switches to translate the ORF on the tmRNA; the nascent peptide is terminated with the 'tag peptide' encoded by the tmRNA and targeted for degradation. The ribosome is freed to recommence translation, which seems to be the essential function of trans-translation. This chain is SsrA-binding protein, found in Prochlorococcus marinus (strain MIT 9303).